A 512-amino-acid polypeptide reads, in one-letter code: NADH-quinone oxidoreductase subunit N 2 (512 aa).

14 helical membrane passes run 23-43 (AFVP…IDLF), 50-70 (TIIP…VYLQ), 88-108 (FAIF…LISI), 120-140 (SLGE…LMAS), 144-164 (LLMM…LVGY), 179-199 (VIYG…IYGL), 220-240 (ITLM…AGVV), 254-274 (PTPI…AMLI), 295-315 (WVTL…VVAL), 323-343 (LLAY…IVAD), 351-371 (LFYL…IILI), 394-414 (AASL…VGFI), 429-449 (VFVW…YFYF), and 477-497 (LVAF…PLSV).

This sequence belongs to the complex I subunit 2 family. In terms of assembly, NDH-1 is composed of 14 different subunits. Subunits NuoA, H, J, K, L, M, N constitute the membrane sector of the complex.

Its subcellular location is the cell inner membrane. The catalysed reaction is a quinone + NADH + 5 H(+)(in) = a quinol + NAD(+) + 4 H(+)(out). NDH-1 shuttles electrons from NADH, via FMN and iron-sulfur (Fe-S) centers, to quinones in the respiratory chain. The immediate electron acceptor for the enzyme in this species is believed to be a menaquinone. Couples the redox reaction to proton translocation (for every two electrons transferred, four hydrogen ions are translocated across the cytoplasmic membrane), and thus conserves the redox energy in a proton gradient. This chain is NADH-quinone oxidoreductase subunit N 2, found in Chloroherpeton thalassium (strain ATCC 35110 / GB-78).